A 205-amino-acid polypeptide reads, in one-letter code: GTP cyclohydrolase-2 (205 aa).

Position 49-53 (49-53 (RIHSE)) interacts with GTP. Residues C54, C65, and C67 each coordinate Zn(2+). GTP is bound by residues Q70, 92–94 (EGR), and T114. The active-site Proton acceptor is D126. The active-site Nucleophile is the R128. The GTP site is built by T149 and K154.

Belongs to the GTP cyclohydrolase II family. Zn(2+) serves as cofactor.

It catalyses the reaction GTP + 4 H2O = 2,5-diamino-6-hydroxy-4-(5-phosphoribosylamino)-pyrimidine + formate + 2 phosphate + 3 H(+). It participates in cofactor biosynthesis; riboflavin biosynthesis; 5-amino-6-(D-ribitylamino)uracil from GTP: step 1/4. Functionally, catalyzes the conversion of GTP to 2,5-diamino-6-ribosylamino-4(3H)-pyrimidinone 5'-phosphate (DARP), formate and pyrophosphate. The polypeptide is GTP cyclohydrolase-2 (Shewanella piezotolerans (strain WP3 / JCM 13877)).